We begin with the raw amino-acid sequence, 312 residues long: Malate dehydrogenase (312 aa).

NAD(+) is bound by residues 7 to 13 (GAAGGIG) and D34. Substrate contacts are provided by R81 and R87. NAD(+) contacts are provided by residues N94 and 117 to 119 (ITN). Substrate contacts are provided by N119 and R153. The Proton acceptor role is filled by H177. Residue M227 participates in NAD(+) binding.

It belongs to the LDH/MDH superfamily. MDH type 1 family. As to quaternary structure, homodimer.

The enzyme catalyses (S)-malate + NAD(+) = oxaloacetate + NADH + H(+). Its function is as follows. Catalyzes the reversible oxidation of malate to oxaloacetate. In Salmonella choleraesuis (strain SC-B67), this protein is Malate dehydrogenase.